The following is a 281-amino-acid chain: 18S rRNA (guanine-N(7))-methyltransferase (281 aa).

Over residues 212 to 231 the composition is skewed to polar residues; the sequence is LPKGLTESQDADQASESMFT. The interval 212-281 is disordered; sequence LPKGLTESQD…YTGRKRKPRF (70 aa). Residues 242 to 256 show a composition bias toward basic and acidic residues; that stretch reads RDLVKKSREWVLEKK.

It belongs to the class I-like SAM-binding methyltransferase superfamily. BUD23/WBSCR22 family. Heterodimer with TRMT112; this heterodimerization is necessary for the metabolic stability and activity of the catalytic subunit BUD23. Interacts with GRIP1. May be ubiquitinated and targeted to degradation in response to pro-inflammatory cytokine signaling.

Its subcellular location is the nucleus. It is found in the nucleoplasm. The protein localises to the cytoplasm. The protein resides in the perinuclear region. It catalyses the reaction a guanosine in 18S rRNA + S-adenosyl-L-methionine = an N(7)-methylguanosine in 18S rRNA + S-adenosyl-L-homocysteine. S-adenosyl-L-methionine-dependent methyltransferase that specifically methylates the N(7) position of a guanine in 18S rRNA. Requires the methyltransferase adapter protein TRM112 for full rRNA methyltransferase activity. Involved in the pre-rRNA processing steps leading to small-subunit rRNA production independently of its RNA-modifying catalytic activity. Important for biogenesis end export of the 40S ribosomal subunit independent on its methyltransferase activity. Locus-specific steroid receptor coactivator. Potentiates transactivation by glucocorticoid (NR3C1), mineralocorticoid (NR3C2), androgen (AR) and progesterone (PGR) receptors. Required for the maintenance of open chromatin at the TSC22D3/GILZ locus to facilitate NR3C1 loading on the response elements. Required for maintenance of dimethylation on histone H3 'Lys-79' (H3K79me2), although direct histone methyltransferase activity is not observed in vitro. This chain is 18S rRNA (guanine-N(7))-methyltransferase, found in Mus musculus (Mouse).